Reading from the N-terminus, the 1661-residue chain is Microtubule cross-linking factor 2 (1661 aa).

The segment at 1–187 is disordered; it reads MEAPAAEPPV…EPSVAASSVG (187 aa). 2 stretches are compositionally biased toward low complexity: residues 76-94 and 133-149; these read AVAP…VRTG and LLGL…SAAG. The span at 167 to 176 shows a compositional bias: pro residues; the sequence is QQPPRPPASP. The interval 211 to 240 is required for association with Golgi apparatus membrane; sequence PSGLVRELEELRSENDYLKDEIEELRAEML. Coiled coils occupy residues 218–281 and 310–351; these read LEEL…AERR and SMRL…LQTE. A disordered region spans residues 353-373; it reads ERPREHSLKKRGTRSLGKADK. Coiled-coil stretches lie at residues 450 to 484, 820 to 865, and 1083 to 1117; these read LKLV…MKDH, IKEL…LKED, and SQEK…LQKA. Residue serine 1169 is modified to Phosphoserine. Residues 1196 to 1221 are disordered; that stretch reads AFGFVSSEPGDPEKDTKEKPGLSSRD. The span at 1206–1215 shows a compositional bias: basic and acidic residues; it reads DPEKDTKEKP. Serine 1255 carries the phosphoserine modification. Disordered regions lie at residues 1432 to 1456, 1538 to 1563, and 1636 to 1661; these read RPCC…DSSK, RAPS…ASYH, and HSPS…PPSE. The span at 1652–1661 shows a compositional bias: basic and acidic residues; it reads GEERALPPSE.

This sequence belongs to the MTCL family. Interacts with CLASP1 and CLASP2. The C-terminal 25 kDa form occurs as a monomer. In terms of processing, proteolytically cleaved in primary hepatocytes into a C-terminal 80 kDa form. Proteolytically cleaved into a C-terminal SOGA 25 kDa form that is detected in plasma. Phosphorylated during mitosis in a CDK1-dependent manner.

The protein localises to the cytoplasm. It localises to the cytoskeleton. The protein resides in the golgi apparatus membrane. It is found in the midbody. Its subcellular location is the secreted. Its function is as follows. Microtubule-associated factor that enables integration of the centrosomal and Golgi-associated microtubules on the Golgi membrane, supporting directional migration. Preferentially acts on the perinuclear microtubules accumulated around the Golgi. Associates with the Golgi membrane through the N-terminal coiled-coil region and directly binds microtubules through the C-terminal domain. Required for faithful chromosome segregation during mitosis. Regulates autophagy by playing a role in the reduction of glucose production in an adiponectin- and insulin-dependent manner. The polypeptide is Microtubule cross-linking factor 2 (Homo sapiens (Human)).